The primary structure comprises 71 residues: UPF0346 protein SMU_1621c (71 aa).

It belongs to the UPF0346 family.

This Streptococcus mutans serotype c (strain ATCC 700610 / UA159) protein is UPF0346 protein SMU_1621c.